A 1137-amino-acid polypeptide reads, in one-letter code: MSLQSAQYLRQAEVLKADMTDSKLGPAEVWTSRQALQDLYQKMLVTDLEYALDKKVEQDLWNHAFKNQITTLQGQAKNRANPNRSEVQANLSLFLEAASGFYTQLLQELCTVFNVDLPCRVKSSQLGIISNKQTHTSAIVKPQSSSCSYICQHCLVHLGDIARYRNQTSQAESYYRHAAQLVPSNGQPYNQLAILASSKGDHLTTIFYYCRSIAVKFPFPAASTNLQKALSKALESRDEVKTKWGVSDFIKAFIKFHGHVYLSKSLEKLSPLREKLEEQFKRLLFQKAFNSQQLVHVTVINLFQLHHLRDFSNETEQHTYSQDEQLCWTQLLALFMSFLGILCKCPLQNESQEESYNAYPLPAVKVSMDWLRLRPRVFQEAVVDERQYIWPWLISLLNSFHPHEEDLSSISATPLPEEFELQGFLALRPSFRNLDFSKGHQGITGDKEGQQRRIRQQRLISIGKWIADNQPRLIQCENEVGKLLFITEIPELILEDPSEAKENLILQETSVIESLAADGSPGLKSVLSTSRNLSNNCDTGEKPVVTFKENIKTREVNRDQGRSFPPKEVRRDYSKGITVTKNDGKKDNNKRKTETKKCTLEKLQETGKQNVAVQVKSQTELRKTPVSEARKTPVTQTPTQASNSQFIPIHHPGAFPPLPSRPGFPPPTYVIPPPVAFSMGSGYTFPAGVSVPGTFLQPTAHSPAGNQVQAGKQSHIPYSQQRPSGPGPMNQGPQQSQPPSQQPLTSLPAQPTAQSTSQLQVQALTQQQQSPTKAVPALGKSPPHHSGFQQYQQADASKQLWNPPQVQGPLGKIMPVKQPYYLQTQDPIKLFEPSLQPPVMQQQPLEKKMKPFPMEPYNHNPSEVKVPEFYWDSSYSMADNRSVMAQQANIDRRGKRSPGVFRPEQDPVPRMPFEKSLLEKPSELMSHSSSFLSLTGFSLNQERYPNNSMFNEVYGKNLTSSSKAELSPSMAPQETSLYSLFEGTPWSPSLPASSDHSTPASQSPHSSNPSSLPSSPPTHNHNSVPFSNFGPIGTPDNRDRRTADRWKTDKPAMGGFGIDYLSATSSSESSWHQASTPSGTWTGHGPSMEDSSAVLMESLKSIWSSSMMHPGPSALEQLLMQQKQKQQRGQGTMNPPH.

N-acetylserine is present on Ser-2. TPR repeat units lie at residues 152–185 (QHCL…VPSN) and 187–219 (QPYN…KFPF). The residue at position 520 (Ser-520) is a Phosphoserine. Positions 620–631 (ELRKTPVSEARK) are enriched in basic and acidic residues. Disordered stretches follow at residues 620-646 (ELRK…NSQF), 696-794 (LQPT…YQQA), 890-911 (IDRR…VPRM), 988-1055 (PSLP…AMGG), 1069-1089 (SSWH…PSME), and 1104-1137 (SSSM…NPPH). Thr-624 is subject to Phosphothreonine. Polar residues-rich tracts occupy residues 633–646 (PVTQ…NSQF) and 696–722 (LQPT…SQQR). A compositionally biased stretch (low complexity) spans 723 to 770 (PSGPGPMNQGPQQSQPPSQQPLTSLPAQPTAQSTSQLQVQALTQQQQS). Phosphoserine occurs at positions 781 and 897. Residues 988 to 998 (PSLPASSDHST) show a composition bias toward polar residues. Residues 999–1025 (PASQSPHSSNPSSLPSSPPTHNHNSVP) show a composition bias toward low complexity. The span at 1036–1050 (DNRDRRTADRWKTDK) shows a compositional bias: basic and acidic residues. Polar residues predominate over residues 1069–1081 (SSWHQASTPSGTW). The span at 1117–1131 (QLLMQQKQKQQRGQG) shows a compositional bias: low complexity.

As to quaternary structure, part of a complex that contains SMG5, SMG7, PPP2CA, a short isoform of UPF3A (isoform UPF3AS, but not isoform UPF3AL) and phosphorylated UPF1. Interacts with DHX34; the interaction is RNA-independent.

The protein resides in the cytoplasm. It is found in the nucleus. In terms of biological role, plays a role in nonsense-mediated mRNA decay. Recruits UPF1 to cytoplasmic mRNA decay bodies. Together with SMG5 is thought to provide a link to the mRNA degradation machinery involving exonucleolytic pathways, and to serve as an adapter for UPF1 to protein phosphatase 2A (PP2A), thereby triggering UPF1 dephosphorylation. This is Nonsense-mediated mRNA decay factor SMG7 from Homo sapiens (Human).